Here is a 307-residue protein sequence, read N- to C-terminus: Thioredoxin reductase (307 aa).

Residue 34–41 (ESKAHGGQ) coordinates FAD. A disulfide bridge links cysteine 134 with cysteine 137. 275–284 (DVRAKSFRQV) provides a ligand contact to FAD.

This sequence belongs to the class-II pyridine nucleotide-disulfide oxidoreductase family. Homodimer. FAD serves as cofactor.

The protein localises to the cytoplasm. The enzyme catalyses [thioredoxin]-dithiol + NADP(+) = [thioredoxin]-disulfide + NADPH + H(+). This is Thioredoxin reductase (trxB) from Treponema pallidum (strain Nichols).